The following is a 542-amino-acid chain: Katanin p60 ATPase-containing subunit A-like 2 (542 aa).

Residues 25–57 enclose the LisH domain; sequence RRKNLLILIMHYLLQEGYMDSANSLEQETKISL. 2 disordered regions span residues 94–126 and 142–168; these read LDHDSRVQSKPRSAGKLRRAGSNSTQGLPRIAQ and HAHQKALSRENSKQENGGNSPREASEI. The segment covering 114-126 has biased composition (polar residues); the sequence is GSNSTQGLPRIAQ. 298–305 lines the ATP pocket; sequence GPPGTGKT.

It belongs to the AAA ATPase family. Katanin p60 subunit A1 subfamily. A-like 2 sub-subfamily.

It localises to the cytoplasm. It is found in the cytoskeleton. Its subcellular location is the spindle. The protein localises to the spindle pole. It carries out the reaction n ATP + n H2O + a microtubule = n ADP + n phosphate + (n+1) alpha/beta tubulin heterodimers.. Functionally, severs microtubules in vitro in an ATP-dependent manner. This activity may promote rapid reorganization of cellular microtubule arrays. This chain is Katanin p60 ATPase-containing subunit A-like 2 (katnal2), found in Xenopus tropicalis (Western clawed frog).